The primary structure comprises 496 residues: MSEEHVHLDESEVYHIRKQKLAELRTGGFNFPNTFRREHLADALLKQYSETEKQTLEQKHVKVSVAGRIVLRRIMGKASFFHIQDVSGRIQVYLRSNDLPDIYEQFKHWDLGDIVGVQGELFKTNTGELTINAEHVELLTKSLRPLPDKFHGLADQELKYRKRYVDLIANEDSRKTFLIRSHLIKAFREFMDDNHFLEVETPMMHPIPGGALARPFVTHHNTLDMTMYLRIAPELYLKRLVVGGFERVYEINRNFRNEGISTRHNPEFTMLEFYQAYADYNDLMNFTEQLFHYLCDKVLATRQIEYQGQVIDFNKPFERLSVKEAILKYHPDIKAQQLETVEGCRTLLNDLGLPYKETDGLGKLQIILFEETVEHQLFQPTFITEYPTEISPLARRSDTNPEVTDRFEFFIAGREIANGFSELNDAEDQAERFRKQVEEKDAGDLEAMHFDSDYIEALEYGLPPTAGEGIGIDRLVMLFTNSQSIRDVILFPHLRQ.

The Mg(2+) site is built by glutamate 408 and glutamate 415.

It belongs to the class-II aminoacyl-tRNA synthetase family. In terms of assembly, homodimer. Mg(2+) is required as a cofactor.

It is found in the cytoplasm. It carries out the reaction tRNA(Lys) + L-lysine + ATP = L-lysyl-tRNA(Lys) + AMP + diphosphate. The chain is Lysine--tRNA ligase from Legionella pneumophila (strain Corby).